We begin with the raw amino-acid sequence, 298 residues long: Acetylglutamate kinase (298 aa).

Substrate is bound by residues 69–70, arginine 91, and asparagine 196; that span reads GG.

Belongs to the acetylglutamate kinase family. ArgB subfamily.

Its subcellular location is the cytoplasm. It catalyses the reaction N-acetyl-L-glutamate + ATP = N-acetyl-L-glutamyl 5-phosphate + ADP. The protein operates within amino-acid biosynthesis; L-arginine biosynthesis; N(2)-acetyl-L-ornithine from L-glutamate: step 2/4. Its function is as follows. Catalyzes the ATP-dependent phosphorylation of N-acetyl-L-glutamate. This chain is Acetylglutamate kinase, found in Granulibacter bethesdensis (strain ATCC BAA-1260 / CGDNIH1).